The sequence spans 606 residues: Zinc finger protein 214 (606 aa).

The KRAB domain maps to 3 to 83 (VTFEDVTIIF…GAQMYENQNY (81 aa)). A C2H2-type 1; degenerate zinc finger spans residues 275 to 297 (YGCDEVDGNFHQSSGVHFHQRVH). The C2H2-type 2 zinc-finger motif lies at 303 to 325 (YSCNACGKSFSQISSLHNHQRVH). A C2H2-type 3; degenerate zinc finger spans residues 330–352 (FYKIECDKDLSRNSLLHIHQRLH). 8 consecutive C2H2-type zinc fingers follow at residues 358–380 (FKCN…QRVH), 386–408 (YKCD…QLVH), 414–436 (YKCE…QRVH), 442–464 (YKCD…QRVH), 470–492 (YTCP…QRVH), 498–520 (YKCE…QRVH), 526–548 (YKCH…QRVH), and 554–576 (YQCA…QRVH).

It belongs to the krueppel C2H2-type zinc-finger protein family.

The protein localises to the nucleus. Its function is as follows. May be involved in transcriptional regulation. This Homo sapiens (Human) protein is Zinc finger protein 214 (ZNF214).